A 221-amino-acid chain; its full sequence is 7-carboxy-7-deazaguanine synthase (221 aa).

Substrate is bound by residues 12–14 (ING) and Arg27. The 199-residue stretch at 18–216 (KSGQLSVFIR…IQIHKIIWNP (199 aa)) folds into the Radical SAM core domain. Cys31, Cys35, and Cys38 together coordinate [4Fe-4S] cluster. A Mg(2+)-binding site is contributed by Thr40. Thr73 contributes to the substrate binding site. Position 75 (Gly75) interacts with S-adenosyl-L-methionine.

This sequence belongs to the radical SAM superfamily. 7-carboxy-7-deazaguanine synthase family. As to quaternary structure, homodimer. The cofactor is [4Fe-4S] cluster. It depends on S-adenosyl-L-methionine as a cofactor. Mg(2+) serves as cofactor.

The catalysed reaction is 6-carboxy-5,6,7,8-tetrahydropterin + H(+) = 7-carboxy-7-deazaguanine + NH4(+). The protein operates within purine metabolism; 7-cyano-7-deazaguanine biosynthesis. Catalyzes the complex heterocyclic radical-mediated conversion of 6-carboxy-5,6,7,8-tetrahydropterin (CPH4) to 7-carboxy-7-deazaguanine (CDG), a step common to the biosynthetic pathways of all 7-deazapurine-containing compounds. This is 7-carboxy-7-deazaguanine synthase from Clostridium acetobutylicum (strain ATCC 824 / DSM 792 / JCM 1419 / IAM 19013 / LMG 5710 / NBRC 13948 / NRRL B-527 / VKM B-1787 / 2291 / W).